The primary structure comprises 85 residues: V-type proton ATPase subunit f (85 aa).

2 helical membrane passes run 13–33 (CTGL…LFSI) and 56–76 (CLGA…QVIV).

V-ATPase is a heteromultimeric enzyme composed of a peripheral catalytic V1 complex (components A to H) attached to an integral membrane V0 proton pore complex (components: a, c, c', c'', d, e, f and VOA1).

It localises to the endoplasmic reticulum membrane. Functionally, accessory component of the V0 complex of vacuolar(H+)-ATPase (V-ATPase), a multisubunit enzyme composed of a peripheral complex (V1) that hydrolyzes ATP and a membrane integral complex (V0) that translocates protons. V-ATPase is responsible for acidifying and maintaining the pH of intracellular compartments. The chain is V-type proton ATPase subunit f from Schizosaccharomyces pombe (strain 972 / ATCC 24843) (Fission yeast).